Here is a 717-residue protein sequence, read N- to C-terminus: Patatin-like phospholipase domain-containing protein PGUG_03164 (717 aa).

The chain crosses the membrane as a helical span at residues 123-143 (WPFLIIITVWILLLCILYTVV). Residues 298–490 (LCLSGGACFA…RTDIPIDALK (193 aa)) enclose the PNPLA domain. The GXSXG signature appears at 329–333 (GTSGG). The active-site Nucleophile is serine 331. The active-site Proton acceptor is aspartate 477. Residues 680-717 (YDSESSAEETLSPGFSQGTHAVLTDESDDDSSDDEIDD) form a disordered region. A compositionally biased stretch (acidic residues) spans 704 to 717 (DESDDDSSDDEIDD).

It belongs to the PLPL family.

Its subcellular location is the membrane. Its function is as follows. Probable lipid hydrolase. The sequence is that of Patatin-like phospholipase domain-containing protein PGUG_03164 from Meyerozyma guilliermondii (strain ATCC 6260 / CBS 566 / DSM 6381 / JCM 1539 / NBRC 10279 / NRRL Y-324) (Yeast).